Reading from the N-terminus, the 117-residue chain is Large ribosomal subunit protein eL22 (117 aa).

A phosphoserine mark is found at Ser-49 and Ser-50.

It belongs to the eukaryotic ribosomal protein eL22 family. Component of the large ribosomal subunit (LSU). Mature yeast ribosomes consist of a small (40S) and a large (60S) subunit. The 40S small subunit contains 1 molecule of ribosomal RNA (18S rRNA) and at least 33 different proteins. The large 60S subunit contains 3 rRNA molecules (25S, 5.8S and 5S rRNA) and at least 46 different proteins.

The protein resides in the cytoplasm. It localises to the nucleus. The protein localises to the nucleolus. Its function is as follows. Component of the ribosome, a large ribonucleoprotein complex responsible for the synthesis of proteins in the cell. The small ribosomal subunit (SSU) binds messenger RNAs (mRNAs) and translates the encoded message by selecting cognate aminoacyl-transfer RNA (tRNA) molecules. The large subunit (LSU) contains the ribosomal catalytic site termed the peptidyl transferase center (PTC), which catalyzes the formation of peptide bonds, thereby polymerizing the amino acids delivered by tRNAs into a polypeptide chain. The nascent polypeptides leave the ribosome through a tunnel in the LSU and interact with protein factors that function in enzymatic processing, targeting, and the membrane insertion of nascent chains at the exit of the ribosomal tunnel. The sequence is that of Large ribosomal subunit protein eL22 (rpl22) from Schizosaccharomyces pombe (strain 972 / ATCC 24843) (Fission yeast).